Reading from the N-terminus, the 118-residue chain is Cysteine--tRNA ligase (118 aa).

Position 28 (Cys28) interacts with Zn(2+). The short motif at 30–40 is the 'HIGH' region element; that stretch reads PTVYNYIHIGN.

The protein belongs to the class-I aminoacyl-tRNA synthetase family. Monomer. Zn(2+) serves as cofactor.

It is found in the cytoplasm. It carries out the reaction tRNA(Cys) + L-cysteine + ATP = L-cysteinyl-tRNA(Cys) + AMP + diphosphate. The protein is Cysteine--tRNA ligase (cysS) of Staphylococcus xylosus.